The chain runs to 352 residues: Glycerol-1-phosphate dehydrogenase [NAD(P)+] (352 aa).

NAD(+) is bound by residues 98–102 and 120–123; these read GKAID and TAAS. D125 is a binding site for substrate. S129 is an NAD(+) binding site. Substrate is bound at residue D172. Zn(2+)-binding residues include D172 and H252. A substrate-binding site is contributed by H256. H268 contributes to the Zn(2+) binding site.

Belongs to the glycerol-1-phosphate dehydrogenase family. Zn(2+) serves as cofactor.

The protein resides in the cytoplasm. It catalyses the reaction sn-glycerol 1-phosphate + NAD(+) = dihydroxyacetone phosphate + NADH + H(+). The enzyme catalyses sn-glycerol 1-phosphate + NADP(+) = dihydroxyacetone phosphate + NADPH + H(+). It participates in membrane lipid metabolism; glycerophospholipid metabolism. In terms of biological role, catalyzes the NAD(P)H-dependent reduction of dihydroxyacetonephosphate (DHAP or glycerone phosphate) to glycerol 1-phosphate (G1P). The G1P thus generated is used as the glycerophosphate backbone of phospholipids in the cellular membranes of Archaea. The chain is Glycerol-1-phosphate dehydrogenase [NAD(P)+] from Halobacterium salinarum (strain ATCC 29341 / DSM 671 / R1).